Here is a 99-residue protein sequence, read N- to C-terminus: METLTFNFPAAEPGRGRTLVGCVSSGDLEVLIEPGTAGSLQIQVVTSVNGSAARWAQLFQRLFEGRAWPAVNIDIHDFGATPGVVRLRLEQGFEEIAHD.

Ser-25 carries the O-(phosphoribosyl dephospho-coenzyme A)serine modification.

The protein belongs to the MdcC family. Covalently binds the prosthetic group of malonate decarboxylase.

The protein localises to the cytoplasm. Functionally, subunit of malonate decarboxylase, it is an acyl carrier protein to which acetyl and malonyl thioester residues are bound via a 2'-(5''-phosphoribosyl)-3'-dephospho-CoA prosthetic group and turn over during the catalytic mechanism. The sequence is that of Malonate decarboxylase acyl carrier protein from Pseudomonas putida (strain GB-1).